The chain runs to 382 residues: MEVSTSYCTPAVNFKYGSFQDSDVSMREDDLFRMGSYNSQGYYADGTHLDGSIGEEDETSSGSNDQHMDFEEDDFDMESSMTEDLVDEDEEEEDEEDNDEWTNQKRTDNQNSVAYYAAMEMLRIRFPFQSIAIRISDFCCLQEKDLLNDTMIDFYLNHIVEHVLPDSNGSNVTVLPSIFWHNLSLRQHAFDSEDEKMMSDEQKMDLKFGDLHDFVADFDLQDFDYIVVPVNEWEHWSLAVICHPFTAQARTVIFDSQLTADLNNLQNMATLIESFMKYSYEKRTGNAMPFPLPCILPQRMPQQTNNFDCGIFIAEFARRFLLSPPKDLDNFDFAREYPDFSTATKRTEMQRVVLSLSTNRARWRPLVELLNGYSTAAPHRAL.

A disordered region spans residues 46–106; it reads GTHLDGSIGE…DNDEWTNQKR (61 aa). Residues 84–100 are compositionally biased toward acidic residues; the sequence is DLVDEDEEEEDEEDNDE.

This sequence belongs to the peptidase C48 family. As to expression, expressed in hermaphrodite-specific neurons, head muscles, body wall muscles and pharyngeal cells.

Its subcellular location is the cytoplasm. The protein resides in the cytoskeleton. It is found in the microtubule organizing center. The protein localises to the centrosome. It localises to the nucleus. Its subcellular location is the mitochondrion matrix. It functions in the pathway protein modification; protein sumoylation. Protease required for deconjugation of smo-1 conjugates from target proteins which is necessary for cell cycle progression. Required for respiration and the maintenance of normal mitochondrial homeostasis. In response to mitochondrial stress, required for the removal of smo-1 conjugates from the transcription factor dve-1, which promotes the translocation of dve-1 from the cytosol to the nucleus to initiate the mitochondrial unfolded protein response. Furthermore, removes the smo-1 conjugates from the transcription factor atfs-1 to promote its stability and activate the mitochondrial unfolded protein response. Also plays a role in promoting mitochondrial unfolded protein response-mediated innate immunity following infection with P.aeruginosa. This chain is Ubiquitin-like protease 4, found in Caenorhabditis elegans.